We begin with the raw amino-acid sequence, 1968 residues long: Signal element on autosome protein 2 (1968 aa).

Low complexity predominate over residues 72–88 (TSSSFSSSLATTTTTSS). 2 disordered regions span residues 72 to 252 (TSSS…TPTQ) and 271 to 364 (QVQQ…VQEQ). A compositionally biased stretch (basic residues) spans 107–119 (SHHHPSSSHHHHP). 4 stretches are compositionally biased toward low complexity: residues 120–134 (GQQQ…SHLQ), 144–165 (HPYY…YGQA), 219–232 (DQPS…LPPL), and 298–338 (LSSI…SSSS). Residues 346 to 362 (PNASSSSLIKRQSQDVQ) show a composition bias toward polar residues. The C2H2-type 1 zinc finger occupies 413-440 (YQCPNCNRNLANARNLQRHRQTCGSAQH). 2 disordered regions span residues 451–499 (RSPP…LYSP) and 538–601 (WSRD…TLDP). A compositionally biased stretch (pro residues) spans 452–467 (SPPPCASAPPVAPPTA). A compositionally biased stretch (polar residues) spans 472–482 (FQHHNSTGNLT). The segment covering 483–498 (LSYSSSSSRHQSSLYS) has biased composition (low complexity). Residues 570 to 594 (PLHHLDSFDSADHRKETPRECHEPD) are compositionally biased toward basic and acidic residues. The C2H2-type 2; degenerate zinc-finger motif lies at 651–672 (FTCEACKKSVSSERSLRRHYNT). Disordered regions lie at residues 681-712 (AASG…GPEK) and 785-854 (VTSA…TGNP). The segment covering 690–702 (TTKRKPATKRPSK) has biased composition (basic residues). Residues 794–804 (HQLPHQQPQQQ) show a composition bias toward low complexity. A compositionally biased stretch (acidic residues) spans 812 to 824 (LLNEQDESADDDG). Low complexity predominate over residues 827-851 (RSSSGTVSNSTTTTTTATTTSSKST). A C2H2-type 3; degenerate zinc finger spans residues 856–875 (FTCEHCARQLCSMSNLKRHR). 4 disordered regions span residues 882 to 905 (ASSS…TAPA), 975 to 1069 (GDAL…EHKN), 1083 to 1227 (RMDA…SPLD), and 1246 to 1273 (PGPL…SQQA). Low complexity-rich tracts occupy residues 981–1015 (QQHQ…AGRI), 1023–1046 (ILNQ…MLNP), and 1108–1131 (PQRS…YQVQ). The segment covering 1136–1146 (PLPPMQLPPLQ) has biased composition (pro residues). Over residues 1147–1185 (NPHNQQQQHQMLHQSQMNYQQVQQVQQVQHVQQQQNLQN) the composition is skewed to low complexity. 2 stretches are compositionally biased toward polar residues: residues 1201–1211 (APGNRSRSHSN) and 1251–1273 (QGQS…SQQA). A C2H2-type 4 zinc finger spans residues 1274–1297 (YICPECKKTYASRKNVKRHRMAVH). 4 disordered regions span residues 1333 to 1478 (TPDS…ADEE), 1569 to 1608 (SVGL…QQQQ), 1624 to 1671 (HPPM…LTCS), and 1769 to 1822 (ADRQ…PSTN). Positions 1388-1403 (ERQEPPKKPVADDHKS) are enriched in basic and acidic residues. Composition is skewed to pro residues over residues 1407-1421 (PLPP…PPPY) and 1429-1445 (LNPP…PPLQ). A compositionally biased stretch (low complexity) spans 1589–1608 (QHPQQHPQQHPQQHPQQQQQ). Residues 1624 to 1633 (HPPMPVSQQF) show a composition bias toward polar residues. The segment at 1668–1694 (LTCSGCKKILGSDYSLRRHRAGCADVQ) adopts a C2H2-type 5; degenerate zinc-finger fold. Residues 1800–1811 (SSSSSSSTSSAS) are compositionally biased toward low complexity. The C2H2-type 6 zinc finger occupies 1826–1858 (HYCQFPECGKNFSSEWNLARHTRESCKMTTRAH).

As to expression, expressed in seam cells, intestine cells, pharyngeal muscles and nerve ring neurons.

It is found in the nucleus. Its subcellular location is the cytoplasm. Functionally, RNA-binding protein, which regulates the expression of proteins required to control developmental timing of events during the L2 to L3 larval stage switch. Binds to the 3'UTR of the transcript of the heterochronic protein lin-28 to post-transcriptionally negatively regulate its expression in certain tissue types in the later larval stages. During larval development, controls the timing of seam cell division and terminal differentiation into adult alae. In vitro, it can also bind to DNA through its first zinc finger. May bind directly or indirectly to the promoter of the sex-determining factor xol-1 to activate its transcription. Its activation of xol-1 transcription controls sex determination and X chromosome dosage compensation to promote male development. Through the negative regulation of lin-28 transcript, it also has a role in the fox-1-sex-1-mediated determination of sexual fate. Acts in the intestine to play a role in regulating adult lifespan. This chain is Signal element on autosome protein 2, found in Caenorhabditis elegans.